A 121-amino-acid polypeptide reads, in one-letter code: Large ribosomal subunit protein uL22 (121 aa).

The protein belongs to the universal ribosomal protein uL22 family. In terms of assembly, part of the 50S ribosomal subunit.

Functionally, this protein binds specifically to 23S rRNA; its binding is stimulated by other ribosomal proteins, e.g. L4, L17, and L20. It is important during the early stages of 50S assembly. It makes multiple contacts with different domains of the 23S rRNA in the assembled 50S subunit and ribosome. Its function is as follows. The globular domain of the protein is located near the polypeptide exit tunnel on the outside of the subunit, while an extended beta-hairpin is found that lines the wall of the exit tunnel in the center of the 70S ribosome. The sequence is that of Large ribosomal subunit protein uL22 from Kocuria rhizophila (strain ATCC 9341 / DSM 348 / NBRC 103217 / DC2201).